Here is a 131-residue protein sequence, read N- to C-terminus: Protein NrdI (131 aa).

This sequence belongs to the NrdI family.

Functionally, probably involved in ribonucleotide reductase function. This Bacillus licheniformis (strain ATCC 14580 / DSM 13 / JCM 2505 / CCUG 7422 / NBRC 12200 / NCIMB 9375 / NCTC 10341 / NRRL NRS-1264 / Gibson 46) protein is Protein NrdI.